Consider the following 336-residue polypeptide: Fimbrial adhesin PapGII (336 aa).

Positions 1–20 are cleaved as a signal peptide; the sequence is MKKWFPALLFSLCVSGESSA. 2 disulfides stabilise this stretch: Cys64–Cys138 and Cys217–Cys249. D-galactose contacts are provided by residues Glu79 and 124–127; that span reads GYKW.

It belongs to the adhesin PapG family.

The protein resides in the secreted. The protein localises to the fimbrium. Tip adhesin component of type P pili that plays a critical role in kidney infection through targeted interaction with the globoseries glycolipids containing the Gal-alpha(1-4)-Gal disaccharide present on uroepithelial cells. In turn, transcriptionally regulates host gene expression in kidney cells, leading to inflammatory pathway activation and renal tissue damage. Acts thereby as key determinant of invasive uropathogenic E.coli (UPEC), which cause pyelonephritis and urinary-source bacteremia. In Escherichia coli O6:H1 (strain CFT073 / ATCC 700928 / UPEC), this protein is Fimbrial adhesin PapGII.